Consider the following 132-residue polypeptide: Small ribosomal subunit protein uS8 (132 aa).

Belongs to the universal ribosomal protein uS8 family. In terms of assembly, part of the 30S ribosomal subunit. Contacts proteins S5 and S12.

Functionally, one of the primary rRNA binding proteins, it binds directly to 16S rRNA central domain where it helps coordinate assembly of the platform of the 30S subunit. This chain is Small ribosomal subunit protein uS8, found in Ehrlichia chaffeensis (strain ATCC CRL-10679 / Arkansas).